The primary structure comprises 150 residues: Globin-3 (150 aa).

Residues 11 to 150 (PLTAADKTKI…IICILLNSAY (140 aa)) form the Globin domain. Positions 74 and 106 each coordinate heme b.

This sequence belongs to the globin family. Monomer.

The chain is Globin-3 from Mordacia mordax (Southern hemisphere lamprey).